A 38-amino-acid chain; its full sequence is Natriuretic peptide DNP (38 aa).

Cys-7 and Cys-23 are oxidised to a cystine. The disordered stretch occupies residues 19–38; sequence SNLGCPSLRDPRPNAPSTSA.

Belongs to the natriuretic peptide family. As to expression, expressed by the venom gland.

It is found in the secreted. Its function is as follows. Exhibits vasodilator, natriuretic and diuretic properties in animal models and human tissues. Acts by stimulating cGMP via the natriuretic peptide receptor 1 (NPR1). Is a poor agonist of the atrial natriuretic peptide receptor 2 (NPR2). Is not degraded by neutral endopeptidase (NEP/MME). Binds to atrial natriuretic peptide clearance receptor (NPR-C/NPR3), which may be responsible of the removal of DNP from the circulation. Increases calcium uptake and induces histamine release from rat peritoneal mast cells. Increases calcium-activated potassium (KCa) current in gastric antral circular smooth muscle cells by increasing cGMP production and activating inositol trisphosphate receptors (IP3Rs). In vivo, reduces both systolic and diastolic blood pressure with no effect on heart rate, when intravenously injected in conscious rabbits. The chain is Natriuretic peptide DNP from Dendroaspis angusticeps (Eastern green mamba).